The primary structure comprises 224 residues: Thymidine kinase, cytosolic (224 aa).

Ser13 is subject to Phosphoserine. Residues 26 to 33 (GPMFSGKS), 58 to 60 (DTR), and 98 to 101 (DEGQ) each bind ATP. The active-site Proton acceptor is Glu99. Position 129 (Phe129) interacts with substrate. Zn(2+)-binding residues include Cys154 and Cys157. Substrate is bound by residues 173-177 (VEVIG) and Tyr182. 2 residues coordinate Zn(2+): Cys186 and Cys189. The KEN box motif lies at 203–205 (KEN).

It belongs to the thymidine kinase family. Homotetramer. Tetramerization from dimerization is induced by ATP and increases catalytic efficiency due to a high affinity for thymidine. Tetramerization is inhibited by phosphorylation at Ser-13. Interacts (via the KEN box) with FZR1. Post-translationally, phosphorylated on Ser-13 in mitosis. Phosphorylation of Ser-13 by CDK1 during mitosis reduces homotetramerization and catalytic efficiency when DNA replication is complete and intracellular TK1 is still present at a high level. In terms of processing, polyubiquitinated. Postmitosis, ubiquitination leads to proteasomal degradation. The KEN box sequence located at the C-terminal region targets for degradation by the anaphase promoting complex (APC/C) activated and rate-limited by FZR1.

Its subcellular location is the cytoplasm. The catalysed reaction is thymidine + ATP = dTMP + ADP + H(+). Its function is as follows. Cell-cycle-regulated enzyme of importance in nucleotide metabolism. Catalyzes the first enzymatic step in the salvage pathway converting thymidine into thymidine monophosphate. Transcriptional regulation limits expression to the S phase of the cell cycle and transient expression coincides with the oscillation in the intracellular dTTP concentration. The polypeptide is Thymidine kinase, cytosolic (TK1) (Gallus gallus (Chicken)).